The following is a 523-amino-acid chain: Leucine-rich repeat-containing protein 27 (523 aa).

The segment at 1-26 (MEDTSPQAVAEKAAKDPKAAKDLKDD) is disordered. Over residues 12–26 (KAAKDPKAAKDLKDD) the composition is skewed to basic and acidic residues. LRR repeat units lie at residues 55–76 (SSPV…FKIP), 77–98 (NLQQ…FFQL), 101–122 (NLTW…IGSH), 124–145 (HLKT…LGQV), and 147–168 (TLTA…IVQK). Disordered regions lie at residues 206 to 236 (QYPV…ADFF) and 372 to 394 (REQT…HSNM). Composition is skewed to basic and acidic residues over residues 227-236 (DQEKEKADFF) and 372-385 (REQT…RELS). Coiled coils occupy residues 335 to 374 (VHAN…WREQ) and 463 to 494 (MQDI…TLNK). The segment at 503-523 (GNLSLHPPASQPQNIFFNTKS) is disordered. Positions 513–523 (QPQNIFFNTKS) are enriched in polar residues.

In Mus musculus (Mouse), this protein is Leucine-rich repeat-containing protein 27 (Lrrc27).